The following is a 416-amino-acid chain: Phakinin (416 aa).

The interval 1–48 (MSKRRVAADLPSGTNSSMPVQRHRVSSLRGTHSPSSLDSPPASRTSAV) is disordered. S2 carries the post-translational modification N-acetylserine. The interval 2–115 (SKRRVAADLP…HTTVEDLGGC (114 aa)) is head. Phosphoserine is present on residues S27, S33, S36, and S91. Residues 28–48 (LRGTHSPSSLDSPPASRTSAV) show a composition bias toward polar residues. Residues 105-416 (DHTTVEDLGG…HALLDREENN (312 aa)) form the IF rod domain. Coiled coils occupy residues 116-146 (LVEY…SKAK), 170-249 (LENA…VKVL), and 308-402 (QTQE…LQKD). The tract at residues 397 to 416 (SQLQKDVASYHALLDREENN) is tail.

The protein belongs to the intermediate filament family. Part of a complex required for lens intermediate filament formation composed of BFSP1, BFSP2 and CRYAA. Found in a complex composed of PPL (via C-terminal linker domain), BFSP1 and BFSP2 in the retinal lens. Within the complex interacts with PPL (via C-terminal linker domain) and with BFSP1. Identified in a complex that contains VIM, EZR, AHNAK, BFSP1, BFSP2, ANK2, PLEC, PRX and spectrin. Interacts with LGSN. Interacts with VIM. Detected in retina lens fiber cells (at protein level). Also expressed in the lens epithelium, abundantly expressed in the anterior and anterolateral epithelium, less frequently expressed nearer the lens coronal equator (at protein level).

Its subcellular location is the cell membrane. It is found in the cytoplasm. The protein localises to the cytoskeleton. The protein resides in the cell cortex. Functionally, required for the correct formation of lens intermediate filaments as part of a complex composed of BFSP1, BFSP2 and CRYAA. Plays a role in maintenance of retinal lens optical clarity. The polypeptide is Phakinin (Bfsp2) (Mus musculus (Mouse)).